Here is a 453-residue protein sequence, read N- to C-terminus: Homogentisate 1,2-dioxygenase (453 aa).

The Proton acceptor role is filled by His304. His347 and Glu353 together coordinate Fe cation. Residues Tyr362 and His383 each contribute to the homogentisate site. Position 383 (His383) interacts with Fe cation.

The protein belongs to the homogentisate dioxygenase family. As to quaternary structure, hexamer; dimer of trimers. Requires Fe cation as cofactor.

The enzyme catalyses homogentisate + O2 = 4-maleylacetoacetate + H(+). The protein operates within amino-acid degradation; L-phenylalanine degradation; acetoacetate and fumarate from L-phenylalanine: step 4/6. Functionally, involved in the catabolism of homogentisate (2,5-dihydroxyphenylacetate or 2,5-OH-PhAc), a central intermediate in the degradation of phenylalanine and tyrosine. Catalyzes the oxidative ring cleavage of the aromatic ring of homogentisate to yield maleylacetoacetate. This Sinorhizobium fredii (strain NBRC 101917 / NGR234) protein is Homogentisate 1,2-dioxygenase.